The primary structure comprises 487 residues: Bifunctional protein GlmU (487 aa).

The pyrophosphorylase stretch occupies residues 1–232; sequence MAVIVLAAGA…AAELAGVNDR (232 aa). Residues 6–9, Lys-20, Gln-77, and 82–83 each bind UDP-N-acetyl-alpha-D-glucosamine; these read LAAG and GT. Residue Asp-107 participates in Mg(2+) binding. UDP-N-acetyl-alpha-D-glucosamine is bound by residues Gly-142, Glu-157, Asn-172, and Asn-230. Asn-230 lines the Mg(2+) pocket. The linker stretch occupies residues 233–253; it reads VQLAAAGAELNRRTVTAAMRG. The tract at residues 254 to 487 is N-acetyltransferase; that stretch reads GATIVDPATT…PTSTPQADQE (234 aa). UDP-N-acetyl-alpha-D-glucosamine-binding residues include Arg-335 and Lys-353. His-365 serves as the catalytic Proton acceptor. UDP-N-acetyl-alpha-D-glucosamine is bound by residues Tyr-368 and Asn-379. Residues Ala-382, 388–389, Ser-407, and Ala-425 contribute to the acetyl-CoA site; that span reads NY. Positions 453–487 are disordered; the sequence is AKKRPGTPAAEAGEAAAKRVAEGGSPTSTPQADQE. Positions 477 to 487 are enriched in polar residues; that stretch reads SPTSTPQADQE.

It in the N-terminal section; belongs to the N-acetylglucosamine-1-phosphate uridyltransferase family. This sequence in the C-terminal section; belongs to the transferase hexapeptide repeat family. As to quaternary structure, homotrimer. Requires Mg(2+) as cofactor.

Its subcellular location is the cytoplasm. The enzyme catalyses alpha-D-glucosamine 1-phosphate + acetyl-CoA = N-acetyl-alpha-D-glucosamine 1-phosphate + CoA + H(+). The catalysed reaction is N-acetyl-alpha-D-glucosamine 1-phosphate + UTP + H(+) = UDP-N-acetyl-alpha-D-glucosamine + diphosphate. It participates in nucleotide-sugar biosynthesis; UDP-N-acetyl-alpha-D-glucosamine biosynthesis; N-acetyl-alpha-D-glucosamine 1-phosphate from alpha-D-glucosamine 6-phosphate (route II): step 2/2. Its pathway is nucleotide-sugar biosynthesis; UDP-N-acetyl-alpha-D-glucosamine biosynthesis; UDP-N-acetyl-alpha-D-glucosamine from N-acetyl-alpha-D-glucosamine 1-phosphate: step 1/1. It functions in the pathway bacterial outer membrane biogenesis; LPS lipid A biosynthesis. Catalyzes the last two sequential reactions in the de novo biosynthetic pathway for UDP-N-acetylglucosamine (UDP-GlcNAc). The C-terminal domain catalyzes the transfer of acetyl group from acetyl coenzyme A to glucosamine-1-phosphate (GlcN-1-P) to produce N-acetylglucosamine-1-phosphate (GlcNAc-1-P), which is converted into UDP-GlcNAc by the transfer of uridine 5-monophosphate (from uridine 5-triphosphate), a reaction catalyzed by the N-terminal domain. The protein is Bifunctional protein GlmU of Corynebacterium jeikeium (strain K411).